A 213-amino-acid chain; its full sequence is Phosphatidylserine decarboxylase proenzyme (213 aa).

Ser182 (schiff-base intermediate with substrate; via pyruvic acid) is an active-site residue. Residue Ser182 is modified to Pyruvic acid (Ser); by autocatalysis.

The protein belongs to the phosphatidylserine decarboxylase family. PSD-A subfamily. As to quaternary structure, heterodimer of a large membrane-associated beta subunit and a small pyruvoyl-containing alpha subunit. Pyruvate is required as a cofactor. Is synthesized initially as an inactive proenzyme. Formation of the active enzyme involves a self-maturation process in which the active site pyruvoyl group is generated from an internal serine residue via an autocatalytic post-translational modification. Two non-identical subunits are generated from the proenzyme in this reaction, and the pyruvate is formed at the N-terminus of the alpha chain, which is derived from the carboxyl end of the proenzyme. The post-translation cleavage follows an unusual pathway, termed non-hydrolytic serinolysis, in which the side chain hydroxyl group of the serine supplies its oxygen atom to form the C-terminus of the beta chain, while the remainder of the serine residue undergoes an oxidative deamination to produce ammonia and the pyruvoyl prosthetic group on the alpha chain.

Its subcellular location is the cell membrane. It carries out the reaction a 1,2-diacyl-sn-glycero-3-phospho-L-serine + H(+) = a 1,2-diacyl-sn-glycero-3-phosphoethanolamine + CO2. Its pathway is phospholipid metabolism; phosphatidylethanolamine biosynthesis; phosphatidylethanolamine from CDP-diacylglycerol: step 2/2. Functionally, catalyzes the formation of phosphatidylethanolamine (PtdEtn) from phosphatidylserine (PtdSer). The chain is Phosphatidylserine decarboxylase proenzyme from Geotalea uraniireducens (strain Rf4) (Geobacter uraniireducens).